The following is a 198-amino-acid chain: Ras-related protein Rab-34, isoform NARR (198 aa).

Tandem repeats lie at residues 7–15 (PRDDVGSPR), 16–24 (PRVIVGTIR), 25–33 (PRVIVGTIR), 34–42 (PRVIVGSAR), 43–51 (ARPPPDGTP), 52–60 (RPQLAAEES), 61–69 (PRPRVIFGT), 70–78 (PRARVILGS), 79–87 (PRPRVIVSS), 88–96 (PWPAVVVAS), 97–105 (PRPRTPVGS), 106–114 (PWPRVVVGT), and 115–123 (PRPRVIVGS). Positions 7–125 (PRDDVGSPRP…RPRVIVGSPR (119 aa)) are 13 x 9 AA approximate tandem-repeats of P-R-V-I-V-G-(S/T)-P-R. Serine 13 carries the post-translational modification Phosphoserine. Residues 37 to 64 (IVGSARARPPPDGTPRPQLAAEESPRPR) form a disordered region. Threonine 69 carries the post-translational modification Phosphothreonine. Phosphoserine occurs at positions 78, 87, and 96. The span at 94-121 (VASPRPRTPVGSPWPRVVVGTPRPRVIV) shows a compositional bias: low complexity. Positions 94–198 (VASPRPRTPV…GAPDRHRGQI (105 aa)) are disordered. Serine 123 is modified (phosphoserine). The segment covering 145-157 (RRQDEHSGTRAEG) has biased composition (basic and acidic residues). Residues 161 to 178 (GGAAPVPEEGGRFARAQR) show a composition bias toward low complexity.

As to quaternary structure, may interact with EIF5A and ERF1. Post-translationally, phosphorylated during M-phase.

It localises to the nucleus. The protein localises to the nucleolus. This chain is Ras-related protein Rab-34, isoform NARR (RAB34), found in Homo sapiens (Human).